We begin with the raw amino-acid sequence, 309 residues long: Cysteinyl leukotriene receptor 2 (309 aa).

The Extracellular portion of the chain corresponds to 1 to 26 (MEVTGTPSSYSNRNCTIENFKKEFYP). Asn-14 is a glycosylation site (N-linked (GlcNAc...) asparagine). The chain crosses the membrane as a helical span at residues 27–47 (IIYLIIFFWGALGNGFSIYVF). Residues 48 to 56 (LQTCKKSTS) are Cytoplasmic-facing. The helical transmembrane segment at 57-77 (VNVFMLNLATSDFLFISTLPF) threads the bilayer. The Extracellular portion of the chain corresponds to 78-98 (RADYYFRGSNWIFGDLACRVM). A disulfide bond links Cys-95 and Cys-171. The helical transmembrane segment at 99–119 (SYSLYVNMYTSIYFLTVLSVV) threads the bilayer. Residues 120-138 (RFLATVHPFRMFHVTSVRS) lie on the Cytoplasmic side of the membrane. Residues 139-159 (AWILCGIIWVFIMASSALLLV) form a helical membrane-spanning segment. Over 160–187 (NGQEEKDNIISCLELSPQKFKSLLIMNH) the chain is Extracellular. A helical membrane pass occupies residues 188 to 208 (IAVAVGFLLPFLTLTVCYLLI). Over 209–229 (IRILLKAEIPESGPRAAHRKA) the chain is Cytoplasmic. Residues 230-250 (LTTIVIAMITFLLCFLPYHAL) traverse the membrane as a helical segment. Topologically, residues 251 to 271 (RTLHLVTWDKDSCGDVLHKAT) are extracellular. A helical transmembrane segment spans residues 272-292 (VITLTMAAANSCFNPFLYYFA). The Cytoplasmic segment spans residues 293–309 (GENFKARLRAIFSKVHL).

Belongs to the G-protein coupled receptor 1 family. In terms of tissue distribution, widely expressed at low levels, with highest expression in the spleen, thymus and adrenal gland, and lower in the kidney, brain and peripheral blood leukocytes.

It localises to the cell membrane. Receptor for cysteinyl leukotrienes. The response is mediated via a G-protein that activates a phosphatidylinositol-calcium second messenger system. The rank order of affinities for the leukotrienes is LTC4 = LTD4 &gt;&gt; LTE4. In Mus musculus (Mouse), this protein is Cysteinyl leukotriene receptor 2 (Cysltr2).